The following is a 155-amino-acid chain: MSEKYVVTWDMFQMHARKLSERLLPASQWKGIIAVSRGGLFPAAVLARELGLRHIETVCIASYHDHNNQGELQVLHAAQVPNGGEGFIVVDDLVDTGNTARAIRQMYPNAKFVTVFAKPAGAELVDDYVIDIPQNTWIEQPWDLGLTFVPPLSRK.

Residues 37–38 (RG) and 91–99 (DDLVDTGNT) each bind 5-phospho-alpha-D-ribose 1-diphosphate. D92 contributes to the Mg(2+) binding site. D95 and I138 together coordinate guanine. Xanthine contacts are provided by D95 and I138. Residues 95 to 99 (DTGNT) and 137 to 138 (WI) contribute to the GMP site.

Belongs to the purine/pyrimidine phosphoribosyltransferase family. XGPT subfamily. As to quaternary structure, homotetramer. Mg(2+) is required as a cofactor.

It is found in the cell inner membrane. It carries out the reaction GMP + diphosphate = guanine + 5-phospho-alpha-D-ribose 1-diphosphate. The enzyme catalyses XMP + diphosphate = xanthine + 5-phospho-alpha-D-ribose 1-diphosphate. It catalyses the reaction IMP + diphosphate = hypoxanthine + 5-phospho-alpha-D-ribose 1-diphosphate. Its pathway is purine metabolism; GMP biosynthesis via salvage pathway; GMP from guanine: step 1/1. The protein operates within purine metabolism; XMP biosynthesis via salvage pathway; XMP from xanthine: step 1/1. Functionally, purine salvage pathway enzyme that catalyzes the transfer of the ribosyl-5-phosphate group from 5-phospho-alpha-D-ribose 1-diphosphate (PRPP) to the N9 position of the 6-oxopurines guanine and xanthine to form the corresponding ribonucleotides GMP (guanosine 5'-monophosphate) and XMP (xanthosine 5'-monophosphate), with the release of PPi. To a lesser extent, also acts on hypoxanthine. This chain is Xanthine-guanine phosphoribosyltransferase 2, found in Haemophilus influenzae (strain 86-028NP).